A 324-amino-acid chain; its full sequence is 4-hydroxy-2-oxoglutarate aldolase, mitochondrial (324 aa).

Residues 1 to 22 (MFAHRSFSLLCRRSAVTSWRSQ) constitute a mitochondrion transit peptide. 74-75 (SN) contacts substrate. Lys193 serves as the catalytic Schiff-base intermediate with substrate. Positions 195 and 219 each coordinate substrate.

The protein belongs to the DapA family. Homotetramer.

The protein resides in the mitochondrion. It catalyses the reaction (4S)-4-hydroxy-2-oxoglutarate = glyoxylate + pyruvate. The enzyme catalyses (4R)-4-hydroxy-2-oxoglutarate = glyoxylate + pyruvate. With respect to regulation, inhibited by divalent cations. Functionally, catalyzes the final step in the metabolic pathway of hydroxyproline. The protein is 4-hydroxy-2-oxoglutarate aldolase, mitochondrial of Danio rerio (Zebrafish).